Reading from the N-terminus, the 436-residue chain is Hydrogenobyrinate a,c-diamide synthase (436 aa).

Residues Arg244–Ala435 form the GATase cobBQ-type domain. The Nucleophile role is filled by Cys327.

This sequence belongs to the CobB/CbiA family. Mg(2+) serves as cofactor.

It carries out the reaction hydrogenobyrinate + 2 L-glutamine + 2 ATP + 2 H2O = hydrogenobyrinate a,c-diamide + 2 L-glutamate + 2 ADP + 2 phosphate + 2 H(+). It participates in cofactor biosynthesis; adenosylcobalamin biosynthesis; cob(II)yrinate a,c-diamide from precorrin-2 (aerobic route): step 9/10. Its function is as follows. Catalyzes the ATP-dependent amidation of the two carboxylate groups at positions a and c of hydrogenobyrinate, using either L-glutamine or ammonia as the nitrogen source. The chain is Hydrogenobyrinate a,c-diamide synthase from Brucella ovis (strain ATCC 25840 / 63/290 / NCTC 10512).